Here is a 241-residue protein sequence, read N- to C-terminus: Large ribosomal subunit protein uL2 (241 aa).

The segment at V201 to R241 is disordered.

This sequence belongs to the universal ribosomal protein uL2 family. As to quaternary structure, part of the 50S ribosomal subunit. Forms a bridge to the 30S subunit in the 70S ribosome.

Functionally, one of the primary rRNA binding proteins. Required for association of the 30S and 50S subunits to form the 70S ribosome, for tRNA binding and peptide bond formation. It has been suggested to have peptidyltransferase activity; this is somewhat controversial. Makes several contacts with the 16S rRNA in the 70S ribosome. The sequence is that of Large ribosomal subunit protein uL2 from Methanobrevibacter smithii (strain ATCC 35061 / DSM 861 / OCM 144 / PS).